The primary structure comprises 352 residues: UDP-N-acetylglucosamine--N-acetylmuramyl-(pentapeptide) pyrophosphoryl-undecaprenol N-acetylglucosamine transferase (352 aa).

UDP-N-acetyl-alpha-D-glucosamine-binding residues include S195 and Q287.

Belongs to the glycosyltransferase 28 family. MurG subfamily.

It is found in the cell membrane. The catalysed reaction is Mur2Ac(oyl-L-Ala-gamma-D-Glu-L-Lys-D-Ala-D-Ala)-di-trans,octa-cis-undecaprenyl diphosphate + UDP-N-acetyl-alpha-D-glucosamine = beta-D-GlcNAc-(1-&gt;4)-Mur2Ac(oyl-L-Ala-gamma-D-Glu-L-Lys-D-Ala-D-Ala)-di-trans,octa-cis-undecaprenyl diphosphate + UDP + H(+). It functions in the pathway cell wall biogenesis; peptidoglycan biosynthesis. Cell wall formation. Catalyzes the transfer of a GlcNAc subunit on undecaprenyl-pyrophosphoryl-MurNAc-pentapeptide (lipid intermediate I) to form undecaprenyl-pyrophosphoryl-MurNAc-(pentapeptide)GlcNAc (lipid intermediate II). The chain is UDP-N-acetylglucosamine--N-acetylmuramyl-(pentapeptide) pyrophosphoryl-undecaprenol N-acetylglucosamine transferase from Streptococcus pneumoniae (strain 70585).